The chain runs to 333 residues: Phosphate acyltransferase (333 aa).

This sequence belongs to the PlsX family. As to quaternary structure, homodimer. Probably interacts with PlsY.

The protein localises to the cytoplasm. It carries out the reaction a fatty acyl-[ACP] + phosphate = an acyl phosphate + holo-[ACP]. It participates in lipid metabolism; phospholipid metabolism. Its function is as follows. Catalyzes the reversible formation of acyl-phosphate (acyl-PO(4)) from acyl-[acyl-carrier-protein] (acyl-ACP). This enzyme utilizes acyl-ACP as fatty acyl donor, but not acyl-CoA. This Ligilactobacillus salivarius (strain UCC118) (Lactobacillus salivarius) protein is Phosphate acyltransferase.